The following is a 473-amino-acid chain: Pentatricopeptide repeat-containing protein At3g60050 (473 aa).

PPR repeat units lie at residues 148–182 (TVNS…GFPT), 183–217 (TART…NYRP), 218–252 (FKHS…GFSP), 253–287 (DVLT…GFSP), 288–322 (DSYT…GIDP), 323–357 (SVLH…GCRP), 358–392 (DVVC…GQLP), 393–427 (NVFT…GCNP), and 428–462 (NFVV…GHYV).

Belongs to the PPR family. P subfamily.

This is Pentatricopeptide repeat-containing protein At3g60050 from Arabidopsis thaliana (Mouse-ear cress).